Consider the following 557-residue polypeptide: MSTSVFNRRWAALLLEALSRHGVQHICIAPGSRSTPLTLAAAANPSLVCHTHFDERGLGHLALGLAKASTEPVAVIVTSGTAAANLYPALIEAGLTGERLILLTADRPPELIDCGANQAIRQPGMFASHPTVSLNLPRPTPDIPASWLVSTIDSAMAQLHHGGLHVNCPFAEPLYGGDEQCYADWSATLGDWWQDCHPWLRQSRPLPQIEQADWLFWRQKRGVVIAGRMTAEEGEQLAQWAELLGWPLIGDVLSQTGQPLPCADLWLAHPGAQRVLAQAQIVLQFGSSLTGKRLLQWQAQCQPQEYWLVDSIAGRLDPANHRGRRIISPVNEWLEQHPALRRTPWASELIIWSENAHAHVEQALNEQFSEAAVAHRLAELLPENGQLFVGNSLIVRLIDALGQLPAGYPVYSNRGASGIDGLLSTAAGVQRATAKPTLAIVGDLSALYDLNALALLRQSSAPTVLLVVNNNGGQIFSLLPTPEADRQRFYCMPQNVSFEHAAAMFGLGYSRPESGLMLKQQVDQCWLRGGVTLIEIEVPPSQGAETLQQLVQQVAQL.

The protein belongs to the TPP enzyme family. MenD subfamily. Homodimer. It depends on Mg(2+) as a cofactor. Requires Mn(2+) as cofactor. Thiamine diphosphate serves as cofactor.

It carries out the reaction isochorismate + 2-oxoglutarate + H(+) = 5-enolpyruvoyl-6-hydroxy-2-succinyl-cyclohex-3-ene-1-carboxylate + CO2. The protein operates within quinol/quinone metabolism; 1,4-dihydroxy-2-naphthoate biosynthesis; 1,4-dihydroxy-2-naphthoate from chorismate: step 2/7. It functions in the pathway quinol/quinone metabolism; menaquinone biosynthesis. Functionally, catalyzes the thiamine diphosphate-dependent decarboxylation of 2-oxoglutarate and the subsequent addition of the resulting succinic semialdehyde-thiamine pyrophosphate anion to isochorismate to yield 2-succinyl-5-enolpyruvyl-6-hydroxy-3-cyclohexene-1-carboxylate (SEPHCHC). The polypeptide is 2-succinyl-5-enolpyruvyl-6-hydroxy-3-cyclohexene-1-carboxylate synthase (Yersinia enterocolitica serotype O:8 / biotype 1B (strain NCTC 13174 / 8081)).